The primary structure comprises 297 residues: Non-homologous end-joining factor 1 (297 aa).

Positions M1 to L131 are globular head. Residues P220 to S286 are C-terminal tail. Positions A222 to M297 are disordered. A compositionally biased stretch (polar residues) spans G232–Q255. A compositionally biased stretch (low complexity) spans V263–S286. An XLM motif is present at residues K287–M297. The span at K287–M297 shows a compositional bias: basic residues.

It belongs to the XRCC4-XLF family. XLF subfamily. Homodimer. Interacts with xrcc4; the interaction is direct and is mediated via a head-to-head interaction between N-terminal head regions. Component of the core long-range non-homologous end joining (NHEJ) complex (also named DNA-PK complex) composed of prkdc/DNA-PKcs, lig4, xrcc4, xrcc6/Ku70, xrcc5/Ku80 and nhej1/xlf.

The protein resides in the nucleus. DNA repair protein involved in DNA non-homologous end joining (NHEJ); required for double-strand break (DSB) repair and V(D)J recombination. It is also involved in telomere maintenance. Plays a key role in NHEJ by promoting the ligation of various mismatched and non-cohesive ends. In some studies, has been shown to associate with xrcc4 to form alternating helical filaments that bridge DNA and act like a bandage, holding together the broken DNA until it is repaired. Alternatively, it has also been shown that rather than forming filaments, a single nhej1 dimer interacts through both head domains with xrcc4 to promote the close alignment of DNA ends. The xrcc4-nhej1/xlf subcomplex binds to the DNA fragments of a DSB in a highly diffusive manner and robustly bridges two independent DNA molecules, holding the broken DNA fragments in close proximity to one other. The mobility of the bridges ensures that the ends remain accessible for further processing by other repair factors. The chain is Non-homologous end-joining factor 1 from Xenopus laevis (African clawed frog).